The following is a 449-amino-acid chain: L10-interacting MYB domain-containing protein (449 aa).

A Myb-like domain is found at 162–225 (SNPQTKGYWS…YTRPQLKNHW (64 aa)). Residues 297–324 (TYTPPSRSRKKLLHNRSESPQWRDTTPL) form a disordered region. Positions 314 to 324 (ESPQWRDTTPL) are enriched in polar residues.

As to quaternary structure, interacts with RPL10A. Expressed in seedlings, leaves, roots, stems and flowers.

It localises to the nucleus. Functionally, transcriptional repressor that associates with ribosomal protein promoters. This is L10-interacting MYB domain-containing protein from Arabidopsis thaliana (Mouse-ear cress).